A 317-amino-acid polypeptide reads, in one-letter code: uncharacterized protein (317 aa).

6 helical membrane-spanning segments follow: residues 14–34, 72–92, 119–139, 196–216, 230–250, and 291–307; these read IPLL…ATVS, LIGF…YGAV, LLFG…LDIA, TLLN…FCKQ, LFLG…ADVL, and SNML…WYTY. 3 Solcar repeats span residues 18–103, 113–217, and 224–313; these read SNDL…LKQR, LENH…CKQK, and LTAF…VSKM.

This sequence belongs to the mitochondrial carrier (TC 2.A.29) family.

It localises to the mitochondrion inner membrane. This is an uncharacterized protein from Schizosaccharomyces pombe (strain 972 / ATCC 24843) (Fission yeast).